A 92-amino-acid polypeptide reads, in one-letter code: Small ribosomal subunit protein uS19 (92 aa).

The protein belongs to the universal ribosomal protein uS19 family.

In terms of biological role, protein S19 forms a complex with S13 that binds strongly to the 16S ribosomal RNA. This is Small ribosomal subunit protein uS19 from Phenylobacterium zucineum (strain HLK1).